The following is a 146-amino-acid chain: Large ribosomal subunit protein uL15 (146 aa).

The segment covering 1 to 13 has biased composition (basic and acidic residues); it reads MKLHELHSAEGSR. The tract at residues 1–55 is disordered; sequence MKLHELHSAEGSRRNRKRVGRGTSSGYGKTSGRGQKGQLARQGGHTRLGFEGGQM. Residues 23–35 are compositionally biased toward gly residues; it reads TSSGYGKTSGRGQ.

Belongs to the universal ribosomal protein uL15 family. As to quaternary structure, part of the 50S ribosomal subunit.

In terms of biological role, binds to the 23S rRNA. The polypeptide is Large ribosomal subunit protein uL15 (Lactobacillus acidophilus (strain ATCC 700396 / NCK56 / N2 / NCFM)).